The sequence spans 485 residues: Protein nucleotidyltransferase YdiU (485 aa).

8 residues coordinate ATP: G90, G92, R93, K113, D125, G126, R176, and R183. Residue D252 is the Proton acceptor of the active site. 2 residues coordinate Mg(2+): N253 and D262. Position 262 (D262) interacts with ATP.

It belongs to the SELO family. Mg(2+) serves as cofactor. It depends on Mn(2+) as a cofactor.

The catalysed reaction is L-seryl-[protein] + ATP = 3-O-(5'-adenylyl)-L-seryl-[protein] + diphosphate. The enzyme catalyses L-threonyl-[protein] + ATP = 3-O-(5'-adenylyl)-L-threonyl-[protein] + diphosphate. It catalyses the reaction L-tyrosyl-[protein] + ATP = O-(5'-adenylyl)-L-tyrosyl-[protein] + diphosphate. It carries out the reaction L-histidyl-[protein] + UTP = N(tele)-(5'-uridylyl)-L-histidyl-[protein] + diphosphate. The catalysed reaction is L-seryl-[protein] + UTP = O-(5'-uridylyl)-L-seryl-[protein] + diphosphate. The enzyme catalyses L-tyrosyl-[protein] + UTP = O-(5'-uridylyl)-L-tyrosyl-[protein] + diphosphate. Nucleotidyltransferase involved in the post-translational modification of proteins. It can catalyze the addition of adenosine monophosphate (AMP) or uridine monophosphate (UMP) to a protein, resulting in modifications known as AMPylation and UMPylation. This Vibrio atlanticus (strain LGP32) (Vibrio splendidus (strain Mel32)) protein is Protein nucleotidyltransferase YdiU.